The primary structure comprises 923 residues: Phosphoenolpyruvate carboxylase (923 aa).

Active-site residues include H149 and K585.

It belongs to the PEPCase type 1 family. Mg(2+) serves as cofactor.

The enzyme catalyses oxaloacetate + phosphate = phosphoenolpyruvate + hydrogencarbonate. In terms of biological role, forms oxaloacetate, a four-carbon dicarboxylic acid source for the tricarboxylic acid cycle. The sequence is that of Phosphoenolpyruvate carboxylase from Nocardia farcinica (strain IFM 10152).